Consider the following 156-residue polypeptide: Cyclic pyranopterin monophosphate synthase (156 aa).

Residues 75 to 77 and 111 to 112 each bind substrate; these read LCH and ME. The active site involves aspartate 126.

It belongs to the MoaC family. As to quaternary structure, homohexamer; trimer of dimers.

The enzyme catalyses (8S)-3',8-cyclo-7,8-dihydroguanosine 5'-triphosphate = cyclic pyranopterin phosphate + diphosphate. The protein operates within cofactor biosynthesis; molybdopterin biosynthesis. In terms of biological role, catalyzes the conversion of (8S)-3',8-cyclo-7,8-dihydroguanosine 5'-triphosphate to cyclic pyranopterin monophosphate (cPMP). This Corynebacterium glutamicum (strain ATCC 13032 / DSM 20300 / JCM 1318 / BCRC 11384 / CCUG 27702 / LMG 3730 / NBRC 12168 / NCIMB 10025 / NRRL B-2784 / 534) protein is Cyclic pyranopterin monophosphate synthase.